The following is a 445-amino-acid chain: FAS-associated factor 2-A (445 aa).

One can recognise a UBA domain in the interval 12 to 53 (EQTEKLLQFQDLTGIESMDQCRQTLQQHNWNIEAAVQDRLNE). A coiled-coil region spans residues 275-353 (SERLEREERN…ERKSECLPAE (79 aa)). The interval 302 to 354 (RADQEKERKKKEKQEQKRREEEEAQRKQMLEERKKRNLEEEKERKSECLPAEP) is disordered. The segment covering 303-348 (ADQEKERKKKEKQEQKRREEEEAQRKQMLEERKKRNLEEEKERKSE) has biased composition (basic and acidic residues). Residues 357–439 (DHPDNVKIIF…GLSQSQLLFV (83 aa)) form the UBX domain.

Its subcellular location is the cytoplasm. The protein resides in the lipid droplet. It localises to the endoplasmic reticulum. In terms of biological role, plays an important role in endoplasmic reticulum-associated degradation (ERAD) that mediates ubiquitin-dependent degradation of misfolded endoplasmic reticulum proteins. Involved in inhibition of lipid droplet degradation. Involved in stress granule disassembly. The protein is FAS-associated factor 2-A (faf2-a) of Xenopus laevis (African clawed frog).